The primary structure comprises 142 residues: Hemoglobin subunit alpha (142 aa).

S1 is subject to N-acetylserine. In terms of domain architecture, Globin spans 1-142 (SLSDKDKAVV…LALALSEKYR (142 aa)). Position 59 (H59) interacts with O2. Position 88 (H88) interacts with heme b.

This sequence belongs to the globin family. As to quaternary structure, heterotetramer of two alpha chains and two beta chains. In terms of tissue distribution, red blood cells.

Involved in oxygen transport from gills to the various peripheral tissues. This is Hemoglobin subunit alpha (hba) from Carassius auratus (Goldfish).